The sequence spans 354 residues: Probable L-ascorbate-6-phosphate lactonase UlaG (354 aa).

Belongs to the UlaG family. Requires a divalent metal cation as cofactor.

The protein localises to the cytoplasm. It catalyses the reaction L-ascorbate 6-phosphate + H2O = 3-dehydro-L-gulonate 6-phosphate. It functions in the pathway cofactor degradation; L-ascorbate degradation; D-xylulose 5-phosphate from L-ascorbate: step 1/4. Its function is as follows. Probably catalyzes the hydrolysis of L-ascorbate-6-P into 3-keto-L-gulonate-6-P. Is essential for L-ascorbate utilization under anaerobic conditions. The chain is Probable L-ascorbate-6-phosphate lactonase UlaG from Shigella flexneri.